A 1025-amino-acid polypeptide reads, in one-letter code: Dihydropyrimidine dehydrogenase [NADP(+)] (1025 aa).

The 4Fe-4S ferredoxin-type 1 domain occupies 69–100 (ERGALREAVRCLKCADAPCQKSCPTSLDIKSF). The [4Fe-4S] cluster site is built by Cys79, Cys82, Cys87, and Cys91. Position 129 (Val129) interacts with FAD. Residues Cys130, Cys136, Cys140, and Gln156 each coordinate [4Fe-4S] cluster. FAD-binding positions include 194–198 (GAGPA), 218–226 (EKQEYVGGL), and Arg235. NADP(+)-binding positions include 340–343 (AGDT), 364–365 (RK), and Arg371. The residue at position 384 (Lys384) is an N6-acetyllysine. NADP(+) contacts are provided by residues 437 to 439 (PFG) and 481 to 487 (DVVGMAN). An FAD-binding site is contributed by 480–489 (GDVVGMANTT). FMN is bound by residues Ser550 and 574-575 (KT). Residues Asn609 and 668–670 (NLS) each bind substrate. Cys671 (proton acceptor) is an active-site residue. Lys709 provides a ligand contact to FMN. Substrate is bound at residue 736–737 (NT). FMN-binding positions include Gly767, 793 to 795 (TGG), and 816 to 817 (CS). Ser905 is subject to Phosphoserine. 2 consecutive 4Fe-4S ferredoxin-type domains span residues 944–976 (VVALIDEEMCINCGKCYMTCNDSGYQAIQFDPE) and 978–1007 (HLPTVSDTCTGCTLCLSVCPIMDCIRMVSR). Residues Cys953, Cys956, Cys959, Cys963, Cys986, Cys989, Cys992, and Cys996 each contribute to the [4Fe-4S] cluster site.

The protein belongs to the dihydropyrimidine dehydrogenase family. Homodimer. FAD is required as a cofactor. FMN serves as cofactor. It depends on [4Fe-4S] cluster as a cofactor.

Its subcellular location is the cytoplasm. It carries out the reaction 5,6-dihydrouracil + NADP(+) = uracil + NADPH + H(+). The catalysed reaction is 5,6-dihydrothymine + NADP(+) = thymine + NADPH + H(+). Its pathway is amino-acid biosynthesis; beta-alanine biosynthesis. Inactivated by 5-iodouracil. Involved in pyrimidine base degradation. Catalyzes the reduction of uracil and thymine. Also involved the degradation of the chemotherapeutic drug 5-fluorouracil. The sequence is that of Dihydropyrimidine dehydrogenase [NADP(+)] from Rattus norvegicus (Rat).